A 222-amino-acid polypeptide reads, in one-letter code: Proteoglycan 3 (222 aa).

The N-terminal stretch at 1-17 (MKQPLILSFLLLGMVSA) is a signal peptide. Basic and acidic residues predominate over residues 27–46 (NPKREESLKQEADGSREQGR). Residues 27-100 (NPKREESLKQ…PKEEDTTHFQ (74 aa)) are disordered. A compositionally biased stretch (acidic residues) spans 71–81 (FEDEEAMESDP). The span at 83–97 (ALNKDSACPKEEDTT) shows a compositional bias: basic and acidic residues. One can recognise a C-type lectin domain in the interval 105 to 221 (CKSCNYVLVR…CKSHLPFICS (117 aa)). Cystine bridges form between Cys-126–Cys-220 and Cys-197–Cys-212.

Expressed in bone marrow, spleen, and thymus. Not detected in heart, liver or lung.

Functionally, possesses similar cytotoxic and cytostimulatory activities to PRG2/MBP. The chain is Proteoglycan 3 from Mus musculus (Mouse).